The primary structure comprises 490 residues: Cobyric acid synthase (490 aa).

Residues 253–440 (KLRVAAPAAP…LHGVFDEPAA (188 aa)) form the GATase cobBQ-type domain. The active-site Nucleophile is Cys-334. The active site involves His-432.

This sequence belongs to the CobB/CobQ family. CobQ subfamily.

It functions in the pathway cofactor biosynthesis; adenosylcobalamin biosynthesis. Functionally, catalyzes amidations at positions B, D, E, and G on adenosylcobyrinic A,C-diamide. NH(2) groups are provided by glutamine, and one molecule of ATP is hydrogenolyzed for each amidation. The sequence is that of Cobyric acid synthase from Chromobacterium violaceum (strain ATCC 12472 / DSM 30191 / JCM 1249 / CCUG 213 / NBRC 12614 / NCIMB 9131 / NCTC 9757 / MK).